A 133-amino-acid chain; its full sequence is Oocytes ribonuclease (133 aa).

The signal sequence occupies residues Met-1–Ser-22. Gln-23 carries the post-translational modification Pyrrolidone carboxylic acid. Residue His-32 is the Proton acceptor of the active site. Cystine bridges form between Cys-41/Cys-93, Cys-56/Cys-103, Cys-74/Cys-118, and Cys-115/Cys-132. Lys-57–Thr-61 provides a ligand contact to substrate. The active-site Proton donor is His-125.

This sequence belongs to the pancreatic ribonuclease family. In terms of assembly, monomer.

It is found in the secreted. Preferentially cleaves single-stranded RNA at pyrimidine residues with a 3'flanking guanine. Hydrolyzes poly(U) and poly(C) as substrates, and prefers the former. The S-lectins in frog eggs may be involved in the fertilization and development of the frog embryo. This lectin agglutinates various animal cells, including normal lymphocytes, erythrocytes, and fibroblasts of animal and human origin. It is cytotoxic against several tumor cells. This Aquarana catesbeiana (American bullfrog) protein is Oocytes ribonuclease (RCR).